A 313-amino-acid polypeptide reads, in one-letter code: Uracil-DNA glycosylase (313 aa).

Polar residues predominate over residues 1 to 12 (MIGQKTLYSFFS). The segment at 1-25 (MIGQKTLYSFFSPSPARKRHAPSPE) is interaction with FAM72A. The interval 1–29 (MIGQKTLYSFFSPSPARKRHAPSPEPAVQ) is mitochondrial localization signal. The tract at residues 1-68 (MIGQKTLYSF…GTPPSSPLSA (68 aa)) is disordered. Phosphoserine is present on residues Ser12 and Ser14. The Important for nuclear sorting signature appears at 17–19 (RKR). Ser23 is modified (phosphoserine). Over residues 43-53 (AAAIPAKKAPA) the composition is skewed to low complexity. The residue at position 60 (Thr60) is a Phosphothreonine. The residue at position 64 (Ser64) is a Phosphoserine. The interaction with RPA2 stretch occupies residues 73–88 (RIQRNKAAALLRLAAR). Gln153 is a uracil binding site. The active-site Proton acceptor is the Asp154. His157 is a dsDNA binding site. A uracil-binding site is contributed by Phe167. Residue Ser178 coordinates dsDNA. Asn213 is a uracil binding site. 5 residues coordinate dsDNA: Ser256, His277, Ser279, Ser282, and Arg285. His277 contributes to the uracil binding site. At Lys295 the chain carries N6-acetyllysine.

Belongs to the uracil-DNA glycosylase (UDG) superfamily. UNG family. In terms of assembly, monomer. As to quaternary structure, interacts with RPA2 subunit of the RPA trimer; this interaction mediates UNG2 recruitment to RPA-coated single-stranded DNA at stalled replication forks. Interacts with PCNA; this interaction mediates UNG2 recruitment to S-phase replication foci. Interacts (via N-terminus) with FAM72A. (Microbial infection) Interacts with HIV-1 Vpr. Processed by mitochondrial serine or cysteine peptidases to yield a mature dominant form that lacks N-terminal 29 amino acid residues and another minor form that lacks N-terminal 77 amino acid residues. The catalytic activity of UNG1 delta29 is not product-inhibited by AP sites.

The protein resides in the mitochondrion. It is found in the nucleus. The enzyme catalyses Hydrolyzes single-stranded DNA or mismatched double-stranded DNA and polynucleotides, releasing free uracil.. It carries out the reaction a 2'-deoxyuridine in single-stranded DNA + H2O = a 2'-deoxyribose 5'-monophosphate in single-stranded DNA + uracil. The catalysed reaction is a 2'-deoxyuridine in double-stranded DNA + H2O = a 2'-deoxyribose 5'-monophosphate in double-stranded DNA + uracil. Uracil-DNA glycosylase that hydrolyzes the N-glycosidic bond between uracil and deoxyribose in single- and double-stranded DNA (ssDNA and dsDNA) to release a free uracil residue and form an abasic (apurinic/apyrimidinic; AP) site. Excises uracil residues arising as a result of misincorporation of dUMP residues by DNA polymerase during replication or due to spontaneous or enzymatic deamination of cytosine. Mediates error-free base excision repair (BER) of uracil at replication forks. According to the model, it is recruited by PCNA to S-phase replication forks to remove misincorporated uracil at U:A base mispairs in nascent DNA strands. Via trimeric RPA it is recruited to ssDNA stretches ahead of the polymerase to allow detection and excision of deaminated cytosines prior to replication. The resultant AP sites temporarily stall replication, allowing time to repair the lesion. Mediates mutagenic uracil processing involved in antibody affinity maturation. Processes AICDA-induced U:G base mispairs at variable immunoglobulin (Ig) regions leading to the generation of transversion mutations. Operates at switch sites of Ig constant regions where it mediates Ig isotype class switch recombination. Excises AICDA-induced uracil residues forming AP sites that are subsequently nicked by APEX1 endonuclease. The accumulation of staggered nicks in opposite strands results in double strand DNA breaks that are finally resolved via non-homologous end joining repair pathway. This chain is Uracil-DNA glycosylase, found in Homo sapiens (Human).